Here is a 579-residue protein sequence, read N- to C-terminus: CTP synthase (579 aa).

The segment at 1 to 281 (MPALRKHPQT…DAYVVRRLNL (281 aa)) is amidoligase domain. Ser-23 contacts CTP. Residue Ser-23 coordinates UTP. ATP contacts are provided by residues 24 to 29 (SLGKGL) and Asp-81. Asp-81 and Glu-155 together coordinate Mg(2+). CTP-binding positions include 162-164 (DIE), 202-207 (KTKPTQ), and Lys-238. UTP-binding positions include 202–207 (KTKPTQ) and Lys-238. The region spanning 306–554 (RIALVGKYID…IGAALDYKAA (249 aa)) is the Glutamine amidotransferase type-1 domain. Gly-369 is an L-glutamine binding site. Residue Cys-396 is the Nucleophile; for glutamine hydrolysis of the active site. L-glutamine is bound by residues 397 to 400 (LGLQ), Glu-419, and Arg-480. Active-site residues include His-527 and Glu-529.

The protein belongs to the CTP synthase family. As to quaternary structure, homotetramer.

It catalyses the reaction UTP + L-glutamine + ATP + H2O = CTP + L-glutamate + ADP + phosphate + 2 H(+). The enzyme catalyses L-glutamine + H2O = L-glutamate + NH4(+). The catalysed reaction is UTP + NH4(+) + ATP = CTP + ADP + phosphate + 2 H(+). It functions in the pathway pyrimidine metabolism; CTP biosynthesis via de novo pathway; CTP from UDP: step 2/2. Allosterically activated by GTP, when glutamine is the substrate; GTP has no effect on the reaction when ammonia is the substrate. The allosteric effector GTP functions by stabilizing the protein conformation that binds the tetrahedral intermediate(s) formed during glutamine hydrolysis. Inhibited by the product CTP, via allosteric rather than competitive inhibition. Catalyzes the ATP-dependent amination of UTP to CTP with either L-glutamine or ammonia as the source of nitrogen. Regulates intracellular CTP levels through interactions with the four ribonucleotide triphosphates. In Mycobacterium sp. (strain JLS), this protein is CTP synthase.